Consider the following 485-residue polypeptide: Ribosomal protein uS12 methylthiotransferase RimO (485 aa).

The 111-residue stretch at 37 to 147 (SRIGFVSLGC…VVEQVHEHLP (111 aa)) folds into the MTTase N-terminal domain. The [4Fe-4S] cluster site is built by Cys46, Cys82, Cys111, Cys179, Cys183, and Cys186. The 238-residue stretch at 165-402 (LTPRHYAYLK…MEVQGEISAA (238 aa)) folds into the Radical SAM core domain. The 67-residue stretch at 405–471 (KARIGNEYQV…EHDVWAVLSE (67 aa)) folds into the TRAM domain.

Belongs to the methylthiotransferase family. RimO subfamily. [4Fe-4S] cluster serves as cofactor.

The protein resides in the cytoplasm. It catalyses the reaction L-aspartate(89)-[ribosomal protein uS12]-hydrogen + (sulfur carrier)-SH + AH2 + 2 S-adenosyl-L-methionine = 3-methylsulfanyl-L-aspartate(89)-[ribosomal protein uS12]-hydrogen + (sulfur carrier)-H + 5'-deoxyadenosine + L-methionine + A + S-adenosyl-L-homocysteine + 2 H(+). Catalyzes the methylthiolation of an aspartic acid residue of ribosomal protein uS12. The polypeptide is Ribosomal protein uS12 methylthiotransferase RimO (Alteromonas mediterranea (strain DSM 17117 / CIP 110805 / LMG 28347 / Deep ecotype)).